A 413-amino-acid chain; its full sequence is Tyrosine--tRNA ligase (413 aa).

Position 33 (tyrosine 33) interacts with L-tyrosine. The 'HIGH' region signature appears at proline 38–histidine 47. Residues tyrosine 162 and glutamine 166 each contribute to the L-tyrosine site. The short motif at lysine 225–threonine 229 is the 'KMSKS' region element. Lysine 228 contacts ATP. The 68-residue stretch at threonine 346–lysine 413 folds into the S4 RNA-binding domain.

This sequence belongs to the class-I aminoacyl-tRNA synthetase family. TyrS type 1 subfamily. As to quaternary structure, homodimer.

Its subcellular location is the cytoplasm. It carries out the reaction tRNA(Tyr) + L-tyrosine + ATP = L-tyrosyl-tRNA(Tyr) + AMP + diphosphate + H(+). Its function is as follows. Catalyzes the attachment of tyrosine to tRNA(Tyr) in a two-step reaction: tyrosine is first activated by ATP to form Tyr-AMP and then transferred to the acceptor end of tRNA(Tyr). This chain is Tyrosine--tRNA ligase, found in Mesoplasma florum (strain ATCC 33453 / NBRC 100688 / NCTC 11704 / L1) (Acholeplasma florum).